Here is a 214-residue protein sequence, read N- to C-terminus: Thymidylate kinase (214 aa).

Position 10–17 (10–17 (GPDGAGKT)) interacts with ATP.

This sequence belongs to the thymidylate kinase family.

The enzyme catalyses dTMP + ATP = dTDP + ADP. In terms of biological role, phosphorylation of dTMP to form dTDP in both de novo and salvage pathways of dTTP synthesis. This Latilactobacillus sakei subsp. sakei (strain 23K) (Lactobacillus sakei subsp. sakei) protein is Thymidylate kinase.